A 270-amino-acid chain; its full sequence is MSTWNDIYNHFDPVAFTLFGFSVHWYGIMYILALLSALGAAKYFVKKDNIPITDALLDNYFFWVEIGVILGARLGYIAIYSGEAVYFFTHPWQIFNPFHNGEFVGIRGMSYHGAVVGFLLATILFCKKYKQNLWQLLDLCALCIPFGYIFGRIGNFLNQELFGRATDVSWGINVFGILRHPSQLYEAALEGLAVFLILFFYRKFKKFDGELIALYAVLYTLARFVCEFFREPDAGIGFIIFGLSMGQILSILMFFGGILAYFFLKKNYIK.

7 helical membrane-spanning segments follow: residues 14-34 (VAFTLFGFSVHWYGIMYILAL), 60-80 (YFFWVEIGVILGARLGYIAIY), 103-123 (FVGIRGMSYHGAVVGFLLATI), 133-153 (LWQLLDLCALCIPFGYIFGRI), 181-201 (PSQLYEAALEGLAVFLILFFY), 209-229 (GELIALYAVLYTLARFVCEFF), and 235-255 (GIGFIIFGLSMGQILSILMFF). Arg-152 serves as a coordination point for a 1,2-diacyl-sn-glycero-3-phospho-(1'-sn-glycerol).

The protein belongs to the Lgt family.

The protein resides in the cell inner membrane. It carries out the reaction L-cysteinyl-[prolipoprotein] + a 1,2-diacyl-sn-glycero-3-phospho-(1'-sn-glycerol) = an S-1,2-diacyl-sn-glyceryl-L-cysteinyl-[prolipoprotein] + sn-glycerol 1-phosphate + H(+). It participates in protein modification; lipoprotein biosynthesis (diacylglyceryl transfer). Functionally, catalyzes the transfer of the diacylglyceryl group from phosphatidylglycerol to the sulfhydryl group of the N-terminal cysteine of a prolipoprotein, the first step in the formation of mature lipoproteins. The polypeptide is Phosphatidylglycerol--prolipoprotein diacylglyceryl transferase (Campylobacter curvus (strain 525.92)).